Here is a 260-residue protein sequence, read N- to C-terminus: Acetyl-coenzyme A carboxylase carboxyl transferase subunit alpha (260 aa).

Residues 1 to 235 (MSAYDKVMAA…SNKILHSINK (235 aa)) enclose the CoA carboxyltransferase C-terminal domain.

This sequence belongs to the AccA family. Acetyl-CoA carboxylase is a heterohexamer composed of biotin carboxyl carrier protein (AccB), biotin carboxylase (AccC) and two subunits each of ACCase subunit alpha (AccA) and ACCase subunit beta (AccD).

It is found in the cytoplasm. It catalyses the reaction N(6)-carboxybiotinyl-L-lysyl-[protein] + acetyl-CoA = N(6)-biotinyl-L-lysyl-[protein] + malonyl-CoA. The protein operates within lipid metabolism; malonyl-CoA biosynthesis; malonyl-CoA from acetyl-CoA: step 1/1. Functionally, component of the acetyl coenzyme A carboxylase (ACC) complex. First, biotin carboxylase catalyzes the carboxylation of biotin on its carrier protein (BCCP) and then the CO(2) group is transferred by the carboxyltransferase to acetyl-CoA to form malonyl-CoA. In Ruminiclostridium cellulolyticum (strain ATCC 35319 / DSM 5812 / JCM 6584 / H10) (Clostridium cellulolyticum), this protein is Acetyl-coenzyme A carboxylase carboxyl transferase subunit alpha.